The chain runs to 664 residues: MGKTPGKWIKTLLLGKKSPKSNSDNRSQKLKSAKKEELVESVTEDLSNLTVDPPVVSSQPVPASTAQNVVSPINGDESKDNLESRNDLGEVELEQAAIKVQATFRAHQARRAFRTLKGIIRLQAVIRGHLVRRQAIATYSCIWGIVKFQALVRGQKARSSDIAIQFQKKHMEASDSEVLQSSTCSWMDNPTKFVFVDKLLASSPTALPLKIQYGPEEPNSAKVWLERWTQLQVWSSGSRVPRIEIPKSQSKKRNYQAVVEAEKKRPKRSIKKPSGTTSGTGPSRFTAERNKPKRNVRKASTLSKDPLRNESDKANHNSRKSRSGSKEGSPLEIKDEKPSPSLKRSSLSNGSKKATLRSAEKKKKDIPDSSVQIQPEGKVSENVLEGGDNIEFAEKEKDTTDSVQIESEGKVSGNVLEGGEGENIVFTEKEKDTADPVQIEPERKVLEEGDNIESSGKEKDTGDSVQIESEGKVLEGGDNIEFGEKEKDKADAVPIEFDIVKDEKSPVLDRTEEDELKTAETSDKAEALKCADVKVSSENGNVGSDNTKQSEKRALLPANIDKQDDGLTLSGRKIPSYMAPTASAKARVKGEASPRFAQAKTEINGALRRHSLPSPANGKLSTTTMSPRAQKLLLASAKGSMNGDKSFTSSKDITHKSTRTDWKR.

Positions 1-85 (MGKTPGKWIK…DESKDNLESR (85 aa)) are disordered. Low complexity predominate over residues 51–64 (VDPPVVSSQPVPAS). Over residues 76 to 85 (DESKDNLESR) the composition is skewed to basic and acidic residues. 3 consecutive IQ domains span residues 93–121 (LEQA…GIIR), 122–140 (LQAV…ATYS), and 144–170 (GIVK…QKKH). Positions 106-116 (AHQARRAFRTL) are calmodulin-binding. 3 disordered regions span residues 244–488 (EIPK…KEKD), 502–573 (DEKS…SGRK), and 637–664 (AKGS…DWKR). The short motif at 251–258 (KKRNYQAV) is the Nuclear localization signal 1 element. Over residues 305 to 315 (DPLRNESDKAN) the composition is skewed to basic and acidic residues. Over residues 339-353 (SPSLKRSSLSNGSKK) the composition is skewed to low complexity. The Nuclear localization signal 2 signature appears at 351 to 358 (SKKATLRS). Composition is skewed to basic and acidic residues over residues 358-367 (SAEKKKKDIP), 427-447 (TEKE…KVLE), and 502-532 (DEKS…KCAD). Residues 536–547 (SSENGNVGSDNT) show a composition bias toward polar residues. Residues 652–664 (DITHKSTRTDWKR) show a composition bias toward basic and acidic residues.

It belongs to the IQD family. As to quaternary structure, binds to multiple calmodulin (CaM) in the presence of Ca(2+) and CaM-like proteins.

The protein resides in the nucleus. The protein localises to the cytoplasm. It localises to the cytoskeleton. In terms of biological role, may be involved in cooperative interactions with calmodulins or calmodulin-like proteins. Recruits calmodulin proteins to microtubules, thus being a potential scaffold in cellular signaling and trafficking. May associate with nucleic acids and regulate gene expression at the transcriptional or post-transcriptional level. The chain is Protein IQ-DOMAIN 28 from Arabidopsis thaliana (Mouse-ear cress).